Reading from the N-terminus, the 290-residue chain is 4-hydroxy-3-methylbut-2-enyl diphosphate reductase (290 aa).

C13 contacts [4Fe-4S] cluster. Residues H41 and H75 each contribute to the (2E)-4-hydroxy-3-methylbut-2-enyl diphosphate site. Dimethylallyl diphosphate is bound by residues H41 and H75. Residues H41 and H75 each contribute to the isopentenyl diphosphate site. C97 is a binding site for [4Fe-4S] cluster. H129 is a binding site for (2E)-4-hydroxy-3-methylbut-2-enyl diphosphate. Dimethylallyl diphosphate is bound at residue H129. H129 is an isopentenyl diphosphate binding site. E131 acts as the Proton donor in catalysis. T167 lines the (2E)-4-hydroxy-3-methylbut-2-enyl diphosphate pocket. C198 contributes to the [4Fe-4S] cluster binding site. (2E)-4-hydroxy-3-methylbut-2-enyl diphosphate-binding residues include S226, S227, N228, and S270. Positions 226, 227, 228, and 270 each coordinate dimethylallyl diphosphate. Residues S226, S227, N228, and S270 each contribute to the isopentenyl diphosphate site.

Belongs to the IspH family. The cofactor is [4Fe-4S] cluster.

The catalysed reaction is isopentenyl diphosphate + 2 oxidized [2Fe-2S]-[ferredoxin] + H2O = (2E)-4-hydroxy-3-methylbut-2-enyl diphosphate + 2 reduced [2Fe-2S]-[ferredoxin] + 2 H(+). It carries out the reaction dimethylallyl diphosphate + 2 oxidized [2Fe-2S]-[ferredoxin] + H2O = (2E)-4-hydroxy-3-methylbut-2-enyl diphosphate + 2 reduced [2Fe-2S]-[ferredoxin] + 2 H(+). It functions in the pathway isoprenoid biosynthesis; dimethylallyl diphosphate biosynthesis; dimethylallyl diphosphate from (2E)-4-hydroxy-3-methylbutenyl diphosphate: step 1/1. It participates in isoprenoid biosynthesis; isopentenyl diphosphate biosynthesis via DXP pathway; isopentenyl diphosphate from 1-deoxy-D-xylulose 5-phosphate: step 6/6. Catalyzes the conversion of 1-hydroxy-2-methyl-2-(E)-butenyl 4-diphosphate (HMBPP) into a mixture of isopentenyl diphosphate (IPP) and dimethylallyl diphosphate (DMAPP). Acts in the terminal step of the DOXP/MEP pathway for isoprenoid precursor biosynthesis. This chain is 4-hydroxy-3-methylbut-2-enyl diphosphate reductase, found in Parabacteroides distasonis (strain ATCC 8503 / DSM 20701 / CIP 104284 / JCM 5825 / NCTC 11152).